Consider the following 397-residue polypeptide: MAKAKFERNKPHCNIGTIGHVDHGKTSLTAAITKVLAETSGGATFTAYDQIDKAPEEKARGITISTAHVEYETQNRHYAHVDCPGHADYVKNMITGAAQMDGAILVVSAADGPMPQTREHILLARQVGVPALVVFLNKCDMVDDPELLELVELEVRELLSKYDFPGDDIPIVRGSALCALENKSPELGAEAILKLMAEVDKYIPQPERPVDQPFLMPIEDVFSISGRGTVVTGRVERGIVKVGDEVEIVGIRPTVKTTVTGIEMFRKLLDQGQAGDNVGVLLRGTKREDVERGQVVCKPGSVKPHTKFKAEAYILTKEEGGRHTPFFTNYRPQFYFRTTDVTGVVTLPEGTEMVMPGDNISVDVQLIVPIAMEEKLRFAIREGGRTVGAGVVASIIE.

The 198-residue stretch at 10 to 207 (KPHCNIGTIG…EVDKYIPQPE (198 aa)) folds into the tr-type G domain. The interval 19–26 (GHVDHGKT) is G1. 19-26 (GHVDHGKT) contacts GTP. Residue Thr26 participates in Mg(2+) binding. The segment at 61-65 (GITIS) is G2. Positions 82–85 (DCPG) are G3. Residues 82 to 86 (DCPGH) and 137 to 140 (NKCD) contribute to the GTP site. Residues 137–140 (NKCD) are G4. Positions 175–177 (SAL) are G5.

It belongs to the TRAFAC class translation factor GTPase superfamily. Classic translation factor GTPase family. EF-Tu/EF-1A subfamily. As to quaternary structure, monomer.

Its subcellular location is the cytoplasm. It catalyses the reaction GTP + H2O = GDP + phosphate + H(+). GTP hydrolase that promotes the GTP-dependent binding of aminoacyl-tRNA to the A-site of ribosomes during protein biosynthesis. The polypeptide is Elongation factor Tu (Azorhizobium caulinodans (strain ATCC 43989 / DSM 5975 / JCM 20966 / LMG 6465 / NBRC 14845 / NCIMB 13405 / ORS 571)).